A 78-amino-acid polypeptide reads, in one-letter code: UPF0154 protein lp_2061 (78 aa).

A helical transmembrane segment spans residues 5–27 (TGIWILIVVIGVLVGLTGGFFGA).

The protein belongs to the UPF0154 family.

Its subcellular location is the membrane. This Lactiplantibacillus plantarum (strain ATCC BAA-793 / NCIMB 8826 / WCFS1) (Lactobacillus plantarum) protein is UPF0154 protein lp_2061.